We begin with the raw amino-acid sequence, 148 residues long: Large ribosomal subunit protein bL19 (148 aa).

This sequence belongs to the bacterial ribosomal protein bL19 family.

Functionally, this protein is located at the 30S-50S ribosomal subunit interface and may play a role in the structure and function of the aminoacyl-tRNA binding site. This Paramagnetospirillum magneticum (strain ATCC 700264 / AMB-1) (Magnetospirillum magneticum) protein is Large ribosomal subunit protein bL19.